A 79-amino-acid chain; its full sequence is Large ribosomal subunit protein bL31 (79 aa).

Residues C16, C18, C37, and C40 each coordinate Zn(2+).

The protein belongs to the bacterial ribosomal protein bL31 family. Type A subfamily. Part of the 50S ribosomal subunit. It depends on Zn(2+) as a cofactor.

In terms of biological role, binds the 23S rRNA. This is Large ribosomal subunit protein bL31 from Coxiella burnetii (strain CbuG_Q212) (Coxiella burnetii (strain Q212)).